The chain runs to 186 residues: Ribosome-recycling factor (186 aa).

This sequence belongs to the RRF family.

The protein resides in the cytoplasm. In terms of biological role, responsible for the release of ribosomes from messenger RNA at the termination of protein biosynthesis. May increase the efficiency of translation by recycling ribosomes from one round of translation to another. This chain is Ribosome-recycling factor, found in Bartonella bacilliformis (strain ATCC 35685 / KC583 / Herrer 020/F12,63).